The following is a 384-amino-acid chain: Probable L-tyrosine/L-aspartate decarboxylase (384 aa).

Lys233 is modified (N6-(pyridoxal phosphate)lysine).

It belongs to the group II decarboxylase family. MfnA subfamily. Requires pyridoxal 5'-phosphate as cofactor.

The enzyme catalyses L-tyrosine + H(+) = tyramine + CO2. It carries out the reaction L-aspartate + H(+) = beta-alanine + CO2. Its pathway is cofactor biosynthesis; methanofuran biosynthesis. The protein operates within cofactor biosynthesis; coenzyme A biosynthesis. Its function is as follows. Catalyzes the decarboxylation of L-tyrosine to produce tyramine for methanofuran biosynthesis. Can also catalyze the decarboxylation of L-aspartate to produce beta-alanine for coenzyme A (CoA) biosynthesis. The polypeptide is Probable L-tyrosine/L-aspartate decarboxylase (Methanococcus maripaludis (strain DSM 14266 / JCM 13030 / NBRC 101832 / S2 / LL)).